A 166-amino-acid polypeptide reads, in one-letter code: Cyclic pyranopterin monophosphate synthase (166 aa).

Residues 75–77 (MCH) and 115–116 (ME) contribute to the substrate site. D130 is an active-site residue.

Belongs to the MoaC family. Homohexamer; trimer of dimers.

It carries out the reaction (8S)-3',8-cyclo-7,8-dihydroguanosine 5'-triphosphate = cyclic pyranopterin phosphate + diphosphate. The protein operates within cofactor biosynthesis; molybdopterin biosynthesis. Its function is as follows. Catalyzes the conversion of (8S)-3',8-cyclo-7,8-dihydroguanosine 5'-triphosphate to cyclic pyranopterin monophosphate (cPMP). The sequence is that of Cyclic pyranopterin monophosphate synthase from Shouchella clausii (strain KSM-K16) (Alkalihalobacillus clausii).